The sequence spans 163 residues: SsrA-binding protein (163 aa).

Residues 138 to 157 (EDRRGAIAERESKREMDRAL) show a composition bias toward basic and acidic residues. The tract at residues 138–163 (EDRRGAIAERESKREMDRALARGRRR) is disordered.

This sequence belongs to the SmpB family.

The protein localises to the cytoplasm. In terms of biological role, required for rescue of stalled ribosomes mediated by trans-translation. Binds to transfer-messenger RNA (tmRNA), required for stable association of tmRNA with ribosomes. tmRNA and SmpB together mimic tRNA shape, replacing the anticodon stem-loop with SmpB. tmRNA is encoded by the ssrA gene; the 2 termini fold to resemble tRNA(Ala) and it encodes a 'tag peptide', a short internal open reading frame. During trans-translation Ala-aminoacylated tmRNA acts like a tRNA, entering the A-site of stalled ribosomes, displacing the stalled mRNA. The ribosome then switches to translate the ORF on the tmRNA; the nascent peptide is terminated with the 'tag peptide' encoded by the tmRNA and targeted for degradation. The ribosome is freed to recommence translation, which seems to be the essential function of trans-translation. The polypeptide is SsrA-binding protein (Anaeromyxobacter dehalogenans (strain 2CP-1 / ATCC BAA-258)).